The sequence spans 156 residues: 6,7-dimethyl-8-ribityllumazine synthase (156 aa).

Residues F23, 57–59 (AFE), and 81–83 (AVI) each bind 5-amino-6-(D-ribitylamino)uracil. 86 to 87 (AT) serves as a coordination point for (2S)-2-hydroxy-3-oxobutyl phosphate. Catalysis depends on H89, which acts as the Proton donor. F114 contributes to the 5-amino-6-(D-ribitylamino)uracil binding site. R128 serves as a coordination point for (2S)-2-hydroxy-3-oxobutyl phosphate.

It belongs to the DMRL synthase family.

It catalyses the reaction (2S)-2-hydroxy-3-oxobutyl phosphate + 5-amino-6-(D-ribitylamino)uracil = 6,7-dimethyl-8-(1-D-ribityl)lumazine + phosphate + 2 H2O + H(+). It functions in the pathway cofactor biosynthesis; riboflavin biosynthesis; riboflavin from 2-hydroxy-3-oxobutyl phosphate and 5-amino-6-(D-ribitylamino)uracil: step 1/2. Catalyzes the formation of 6,7-dimethyl-8-ribityllumazine by condensation of 5-amino-6-(D-ribitylamino)uracil with 3,4-dihydroxy-2-butanone 4-phosphate. This is the penultimate step in the biosynthesis of riboflavin. This chain is 6,7-dimethyl-8-ribityllumazine synthase, found in Sulfurovum sp. (strain NBC37-1).